Reading from the N-terminus, the 204-residue chain is Protein GrpE (204 aa).

Over residues 1-12 (MSNQEKKMHEEE) the composition is skewed to basic and acidic residues. Positions 1–37 (MSNQEKKMHEEELQQQETVEADTEAEAEAVGTDADIE) are disordered.

Belongs to the GrpE family. In terms of assembly, homodimer.

Its subcellular location is the cytoplasm. Its function is as follows. Participates actively in the response to hyperosmotic and heat shock by preventing the aggregation of stress-denatured proteins, in association with DnaK and GrpE. It is the nucleotide exchange factor for DnaK and may function as a thermosensor. Unfolded proteins bind initially to DnaJ; upon interaction with the DnaJ-bound protein, DnaK hydrolyzes its bound ATP, resulting in the formation of a stable complex. GrpE releases ADP from DnaK; ATP binding to DnaK triggers the release of the substrate protein, thus completing the reaction cycle. Several rounds of ATP-dependent interactions between DnaJ, DnaK and GrpE are required for fully efficient folding. The chain is Protein GrpE from Vibrio proteolyticus (Aeromonas proteolytica).